The chain runs to 224 residues: Redox-sensing transcriptional repressor Rex (224 aa).

Residues 17–56 (RYHRCLEELLKNDIKRISSKELSERMGVTASQIRQDLNNF) constitute a DNA-binding region (H-T-H motif). 91 to 96 (GAGNLG) is a binding site for NAD(+).

Belongs to the transcriptional regulatory Rex family. In terms of assembly, homodimer.

The protein localises to the cytoplasm. In terms of biological role, modulates transcription in response to changes in cellular NADH/NAD(+) redox state. The polypeptide is Redox-sensing transcriptional repressor Rex (Caldanaerobacter subterraneus subsp. tengcongensis (strain DSM 15242 / JCM 11007 / NBRC 100824 / MB4) (Thermoanaerobacter tengcongensis)).